The sequence spans 177 residues: Ribosome maturation factor RimM (177 aa).

The 82-residue stretch at 96–177 (DNEFYWVDLI…KITVDWGLDY (82 aa)) folds into the PRC barrel domain.

This sequence belongs to the RimM family. In terms of assembly, binds ribosomal protein uS19.

Its subcellular location is the cytoplasm. Functionally, an accessory protein needed during the final step in the assembly of 30S ribosomal subunit, possibly for assembly of the head region. Essential for efficient processing of 16S rRNA. May be needed both before and after RbfA during the maturation of 16S rRNA. It has affinity for free ribosomal 30S subunits but not for 70S ribosomes. The chain is Ribosome maturation factor RimM from Herminiimonas arsenicoxydans.